The following is a 1474-amino-acid chain: SH3 and multiple ankyrin repeat domains protein 2 (1474 aa).

Residues 66-76 are compositionally biased toward polar residues; it reads LSPQLLQQTPS. The segment at 66–125 is disordered; that stretch reads LSPQLLQQTPSKPDGATKSLGSYAPGPRSRSPSLNRLGGAGEDGKRPQPPHWHVGSPFTP. The 60-residue stretch at 148-207 folds into the SH3 domain; sequence VPGRLFVAIKPYQPQVDGEIPLHRGDRVKVLSIGEGGFWEGSARGHIGWFPAECVEEVQC. A Phosphoserine modification is found at glutamine 162. In terms of domain architecture, PDZ spans 248–342; sequence TVVLQKKDNE…HLVLKVVTVT (95 aa). The residue at position 373 (serine 373) is a Phosphoserine. The disordered stretch occupies residues 392-413; sequence RKKKDKPEEIVPASKPSRTAEN. The residue at position 457 (serine 457) is a Phosphoserine. Threonine 486 is subject to Phosphothreonine. Residues 504-534 form a disordered region; sequence LSMPDTSEDIPPPPQSVPPSPPPPSPTTYNC. The segment covering 513 to 529 has biased composition (pro residues); sequence IPPPPQSVPPSPPPPSP. Serine 586 carries the phosphoserine modification. Disordered regions lie at residues 659–920, 947–995, and 1057–1153; these read TIIV…ADDK, PVAG…PAAA, and PALA…ESMD. Low complexity predominate over residues 666 to 678; sequence STSSSGKSSQGSS. The segment covering 711–722 has biased composition (basic and acidic residues); that stretch reads VRDREKRLEARR. Serine 724 bears the Phosphoserine mark. Residues 783–795 show a composition bias toward gly residues; that stretch reads LGGGEAGAQGEAG. Composition is skewed to low complexity over residues 811–823 and 833–846; these read PAAALKSSSPASP and RLLDPSSPLALALS. Basic and acidic residues-rich tracts occupy residues 847-868 and 899-920; these read ARDRAMQESQQGHKGEAPKADL and RRQETENKYETDLSKDRRADDK. Threonine 903 is modified (phosphothreonine). The span at 1075–1085 shows a compositional bias: polar residues; it reads SLNSSQPANST. The span at 1119 to 1130 shows a compositional bias: basic and acidic residues; that stretch reads VDSRSSSDHHLE. Low complexity predominate over residues 1131–1151; that stretch reads TTSTISTVSSISTLSSEGGES. An SH3-binding motif is present at residues 1169-1175; that stretch reads PPVPPKP. Disordered regions lie at residues 1195 to 1216 and 1260 to 1401; these read EDTDGFVIPPPAPPPPPGSAQA and NRGK…ISNK. Positions 1202–1212 are enriched in pro residues; it reads IPPPAPPPPPG. Over residues 1291–1305 the composition is skewed to low complexity; that stretch reads STVSGTRSTTVTFTV. Residue threonine 1292 is glycosylated (O-linked (GlcNAc) threonine). Positions 1307-1317 are enriched in polar residues; the sequence is PGTSQPITLQS. Phosphoserine is present on residues serine 1334 and serine 1338. Low complexity-rich tracts occupy residues 1352–1363 and 1385–1399; these read SAAAASPSPTLS and RSRSPSPSILQQPIS. The region spanning 1411-1474 is the SAM domain; sequence WTKPDVADWL…ERALKQLLDR (64 aa).

This sequence belongs to the SHANK family. As to quaternary structure, is part of a complex with DLG4/PSD-95 and DLGAP1/GKAP. Interacts with CTTN/cortactin SH3 domain, DLGAP1/GKAP and alpha-latrotoxin receptor 1. Interacts with DNM2, DBNL, GRID2, BAIAP2, SLC9A3, PLCB3 and CFTR. Interacts with ABI1 (via SH3 domain). Interacts (via proline-rich region) with PDE4D isoform 5 (via N-terminal region). Interacts with PDE4D isoform 33, isoform 4, isoform 7, isoform 8 and isoform 9 but not isoform 32 and isoform 6. Interacts weakly with PDE4D isoform 31. Interacts with ABI1. As to expression, expressed in epithelial cells (at protein level). All isoforms except isoform 7 are expressed predominantly in brain, with highest levels in olfactory bulb, cerebral cortex, cerebellum, central gray matter and hippocampus. Moderate levels of expression are seen in the caudate putamen, thalamic nuclei and brain stem. In cerebellum primarily expressed in Purkinje cells. Isoform 7 is not expressed in brain but expressed in liver, cholangiocytes and thymus. Isoform 7 is present in pancreas, colonic mucosa and thymocytes (at protein level).

It localises to the apical cell membrane. Its subcellular location is the cytoplasm. The protein localises to the synapse. The protein resides in the postsynaptic density. It is found in the cell projection. It localises to the growth cone. Its subcellular location is the dendritic spine. Functionally, seems to be an adapter protein in the postsynaptic density (PSD) of excitatory synapses that interconnects receptors of the postsynaptic membrane including NMDA-type and metabotropic glutamate receptors, and the actin-based cytoskeleton. May play a role in the structural and functional organization of the dendritic spine and synaptic junction. The protein is SH3 and multiple ankyrin repeat domains protein 2 (Shank2) of Rattus norvegicus (Rat).